We begin with the raw amino-acid sequence, 329 residues long: Delta-aminolevulinic acid dehydratase (329 aa).

Zn(2+) is bound by residues cysteine 122, cysteine 124, and cysteine 132. Lysine 199 (schiff-base intermediate with substrate) is an active-site residue. Residues arginine 209 and arginine 221 each coordinate 5-aminolevulinate. Lysine 252 serves as the catalytic Schiff-base intermediate with substrate. Positions 279 and 318 each coordinate 5-aminolevulinate.

This sequence belongs to the ALAD family. In terms of assembly, homooctamer. Requires Zn(2+) as cofactor.

It catalyses the reaction 2 5-aminolevulinate = porphobilinogen + 2 H2O + H(+). Its pathway is porphyrin-containing compound metabolism; protoporphyrin-IX biosynthesis; coproporphyrinogen-III from 5-aminolevulinate: step 1/4. Its function is as follows. Catalyzes an early step in the biosynthesis of tetrapyrroles. Binds two molecules of 5-aminolevulinate per subunit, each at a distinct site, and catalyzes their condensation to form porphobilinogen. The chain is Delta-aminolevulinic acid dehydratase (hem2) from Schizosaccharomyces pombe (strain 972 / ATCC 24843) (Fission yeast).